The chain runs to 204 residues: Cytochrome P450 monooxygenase PC-23 (204 aa).

Cys-138 is a heme binding site.

The protein belongs to the cytochrome P450 family. It depends on heme as a cofactor.

Its pathway is secondary metabolite biosynthesis. In terms of biological role, cytochrome P450 monooxygenase; part of the gene cluster that mediates the biosynthesis of the indole diterpenes penitrems. The geranylgeranyl diphosphate (GGPP) synthase penG catalyzes the first step in penitrem biosynthesis via conversion of farnesyl pyrophosphate and isopentyl pyrophosphate into geranylgeranyl pyrophosphate (GGPP). Condensation of indole-3-glycerol phosphate with GGPP by the prenyl transferase penC then forms 3-geranylgeranylindole (3-GGI). Epoxidation by the FAD-dependent monooxygenase penM leads to a epoxidized-GGI that is substrate of the terpene cyclase penB for cyclization to yield paspaline. Paspaline is subsequently converted to 13-desoxypaxilline by the cytochrome P450 monooxygenase penP, the latter being then converted to paxilline by the cytochrome P450 monooxygenase penQ. Paxilline is converted to beta-paxitriol via C-10 ketoreduction by the short-chain dehydrogenase PC-15 which can be monoprenylated at the C-20 by the indole diterpene prenyltransferase penD. A two-step elimination (acetylation and elimination) process performed by the O-acetyltransferase PC-16 and the P.simplicissimum ptmI-ortholog not yet identified in P.crustosum, leads to the production of the prenylated form of penijanthine. The FAD-linked oxidoreductase ptmO then converts the prenylated form of penijanthine into PC-M5 which is in turn transformed into PC-M4 by the aromatic dimethylallyltransferase PC-22. A series of oxidation steps involving 4 cytochrome P450 monooxygenases (PC-21, PC-05, PC-23, PC-20) and a FAD-dependent monooxygenase (PC-14) are required for the transformation of PC-M4 to penitrems A and E. Synthesis of these final products is proposed to proceed via penitrems D and C (PC-21, PC-05, PC-14) and penitrems B and F (PC-21, PC-05, PC-14, PC-23). The protein is Cytochrome P450 monooxygenase PC-23 of Penicillium crustosum (Blue mold fungus).